A 78-amino-acid chain; its full sequence is Acyl carrier protein (78 aa).

Residues 2 to 77 (STIEERVKKI…AAIDYINGHQ (76 aa)) enclose the Carrier domain. S37 is subject to O-(pantetheine 4'-phosphoryl)serine.

Belongs to the acyl carrier protein (ACP) family. 4'-phosphopantetheine is transferred from CoA to a specific serine of apo-ACP by AcpS. This modification is essential for activity because fatty acids are bound in thioester linkage to the sulfhydryl of the prosthetic group.

The protein localises to the cytoplasm. It functions in the pathway lipid metabolism; fatty acid biosynthesis. Functionally, carrier of the growing fatty acid chain in fatty acid biosynthesis. This chain is Acyl carrier protein, found in Erwinia tasmaniensis (strain DSM 17950 / CFBP 7177 / CIP 109463 / NCPPB 4357 / Et1/99).